The primary structure comprises 651 residues: Kinesin-like protein KIF22-A (651 aa).

Positions 31–359 constitute a Kinesin motor domain; sequence RVRVAVRLRP…LNFAAKSKQI (329 aa). 116-123 is an ATP binding site; the sequence is GPTGAGKT. The interval 366-413 is disordered; the sequence is QETTQTVVQPAMKRPREETGHIAGSQKRKKSKNDSTESSPNSSMDTAG. Residues 401-410 show a composition bias toward polar residues; it reads TESSPNSSMD. Residues 452–498 adopt a coiled-coil conformation; sequence KRERMALLKKWEESQMEIERLKEKQKELEQKAMEAEARLEKSNNSDL. Residues 561-564 carry the Important for regulated proteolytic degradation motif; it reads GLEN.

The protein belongs to the TRAFAC class myosin-kinesin ATPase superfamily. Kinesin family. Ubiquitinated, leading to its subsequent proteasomal degradation.

It is found in the nucleus. The protein resides in the cytoplasm. It localises to the cytoskeleton. Its function is as follows. Kinesin family member that is involved in spindle formation and the movements of chromosomes during mitosis and meiosis. Binds to microtubules and to DNA. The sequence is that of Kinesin-like protein KIF22-A (kif22-a) from Xenopus laevis (African clawed frog).